A 195-amino-acid chain; its full sequence is Lipid A acyltransferase PagP (195 aa).

The first 30 residues, 1–30, serve as a signal peptide directing secretion; that stretch reads MRLTLTSRSRLFVLSSLLFISTFDVLSAQA. Active-site residues include H67, D110, and S111.

The protein belongs to the lipid A palmitoyltransferase family. Homodimer.

It is found in the cell outer membrane. It carries out the reaction a lipid A + a 1,2-diacyl-sn-glycero-3-phosphocholine = a hepta-acyl lipid A + a 2-acyl-sn-glycero-3-phosphocholine. The catalysed reaction is a lipid IVA + a 1,2-diacyl-sn-glycero-3-phosphocholine = a lipid IVB + a 2-acyl-sn-glycero-3-phosphocholine. The enzyme catalyses a lipid IIA + a 1,2-diacyl-sn-glycero-3-phosphocholine = a lipid IIB + a 2-acyl-sn-glycero-3-phosphocholine. Functionally, transfers a fatty acid residue from the sn-1 position of a phospholipid to the N-linked hydroxyfatty acid chain on the proximal unit of lipid A or its precursors. The sequence is that of Lipid A acyltransferase PagP from Dickeya chrysanthemi (strain Ech1591) (Dickeya zeae (strain Ech1591)).